The sequence spans 287 residues: 4,4'-diapophytoene synthase (287 aa).

(2E,6E)-farnesyl diphosphate is bound by residues 18–21 (HSKS), Tyr-41, and Arg-45. Mg(2+) is bound by residues Asp-48 and Asp-52. Gln-165 is a (2E,6E)-farnesyl diphosphate binding site. Residue Asn-168 participates in Mg(2+) binding. Residue Arg-171 participates in (2E,6E)-farnesyl diphosphate binding. Asp-172 provides a ligand contact to Mg(2+). Tyr-248 provides a ligand contact to (2E,6E)-farnesyl diphosphate.

The protein belongs to the phytoene/squalene synthase family. CrtM subfamily. Requires Mg(2+) as cofactor.

It catalyses the reaction 2 (2E,6E)-farnesyl diphosphate = 15-cis-4,4'-diapophytoene + 2 diphosphate. It functions in the pathway carotenoid biosynthesis; staphyloxanthin biosynthesis; staphyloxanthin from farnesyl diphosphate: step 1/5. In terms of biological role, involved in the biosynthesis of the yellow-orange carotenoid staphyloxanthin, which plays a role in the virulence via its protective function against oxidative stress. Catalyzes the head-to-head condensation of two molecules of farnesyl diphosphate (FPP) into the colorless C(30) carotenoid 4,4'-diapophytoene (dehydrosqualene). The polypeptide is 4,4'-diapophytoene synthase (crtM) (Staphylococcus aureus (strain bovine RF122 / ET3-1)).